A 76-amino-acid polypeptide reads, in one-letter code: Putative UPF0377 protein YGL260W (76 aa).

It belongs to the UPF0377 family.

The protein is Putative UPF0377 protein YGL260W of Saccharomyces cerevisiae (strain ATCC 204508 / S288c) (Baker's yeast).